Here is a 234-residue protein sequence, read N- to C-terminus: Peptidyl-prolyl cis-trans isomerase, rhodopsin-specific isozyme (234 aa).

The N-terminal stretch at 1 to 19 (MNILKILILLELIYTCVSG) is a signal peptide. Positions 29–187 (YMDVKHQKKP…DPVIIVNCGE (159 aa)) constitute a PPIase cyclophilin-type domain. N-linked (GlcNAc...) asparagine glycosylation occurs at Asn67. A helical transmembrane segment spans residues 202 to 222 (ILGWIKAAGLPFCSSFIVLMI).

The protein belongs to the cyclophilin-type PPIase family. Expressed specifically in photoreceptor cells.

The protein localises to the membrane. The catalysed reaction is [protein]-peptidylproline (omega=180) = [protein]-peptidylproline (omega=0). PPIases accelerate the folding of proteins. It catalyzes the cis-trans isomerization of proline imidic peptide bonds in oligopeptides. Acts on the folding of rhodopsin RH1 and RH2 (but not RH3) and is required for visual transduction. The protein is Peptidyl-prolyl cis-trans isomerase, rhodopsin-specific isozyme (NINAA) of Calliphora vicina (Blue blowfly).